We begin with the raw amino-acid sequence, 157 residues long: MADKNERPIKVMAENRKARFNYAIEDTIEAGIALTGTEVKSIRNGKSTIAESYADSKNGEIWLINATIPEYLQGNRFNHEPKRPRKLLLHRRQINKLIGAVDREGMTLIPLKLYFNERGRAKLQLAVAKGKKLHDKRETEKKRDWSREKGRLLRARG.

Positions 133-157 (LHDKRETEKKRDWSREKGRLLRARG) are disordered. Residues 135 to 151 (DKRETEKKRDWSREKGR) show a composition bias toward basic and acidic residues.

Belongs to the SmpB family.

Its subcellular location is the cytoplasm. Functionally, required for rescue of stalled ribosomes mediated by trans-translation. Binds to transfer-messenger RNA (tmRNA), required for stable association of tmRNA with ribosomes. tmRNA and SmpB together mimic tRNA shape, replacing the anticodon stem-loop with SmpB. tmRNA is encoded by the ssrA gene; the 2 termini fold to resemble tRNA(Ala) and it encodes a 'tag peptide', a short internal open reading frame. During trans-translation Ala-aminoacylated tmRNA acts like a tRNA, entering the A-site of stalled ribosomes, displacing the stalled mRNA. The ribosome then switches to translate the ORF on the tmRNA; the nascent peptide is terminated with the 'tag peptide' encoded by the tmRNA and targeted for degradation. The ribosome is freed to recommence translation, which seems to be the essential function of trans-translation. This is SsrA-binding protein from Bradyrhizobium diazoefficiens (strain JCM 10833 / BCRC 13528 / IAM 13628 / NBRC 14792 / USDA 110).